Here is a 253-residue protein sequence, read N- to C-terminus: Major prion protein (253 aa).

The signal sequence occupies residues 1–22; sequence MANLGCWMLVLFVATWSDLGLC. An interaction with GRB2, ERI3 and SYN1 region spans residues 23-230; it reads KKRPKPGGWN…ESQAYYQRGS (208 aa). The segment at 26 to 108 is disordered; it reads PKPGGWNTGG…WNKPSKPKTN (83 aa). 5 tandem repeats follow at residues 51 to 59, 60 to 67, 68 to 75, 76 to 83, and 84 to 91. The 5 X 8 AA tandem repeats of P-H-G-G-G-W-G-Q stretch occupies residues 51 to 91; sequence PQGGGGWGQPHGGGWGQPHGGGWGQPHGGGWGQPHGGGWGQ. Over residues 52-95 the composition is skewed to gly residues; it reads QGGGGWGQPHGGGWGQPHGGGWGQPHGGGWGQPHGGGWGQGGGT. The Cu(2+) site is built by H61, G62, G63, H69, G70, G71, H77, G78, G79, H85, G86, and G87. Residues C179 and C214 are joined by a disulfide bond. N-linked (GlcNAc...) asparagine glycans are attached at residues N181 and N197. S230 is lipidated: GPI-anchor amidated serine. Positions 231-253 are cleaved as a propeptide — removed in mature form; that stretch reads SMVLFSSPPVILLISFLIFLIVG.

Belongs to the prion family. Monomer and homodimer. Has a tendency to aggregate into amyloid fibrils containing a cross-beta spine, formed by a steric zipper of superposed beta-strands. Soluble oligomers may represent an intermediate stage on the path to fibril formation. Copper binding may promote oligomerization. Interacts with GRB2, APP, ERI3/PRNPIP and SYN1. Mislocalized cytosolically exposed PrP interacts with MGRN1; this interaction alters MGRN1 subcellular location and causes lysosomal enlargement. Interacts with KIAA1191.

It is found in the cell membrane. The protein resides in the golgi apparatus. In terms of biological role, its primary physiological function is unclear. Has cytoprotective activity against internal or environmental stresses. May play a role in neuronal development and synaptic plasticity. May be required for neuronal myelin sheath maintenance. May play a role in iron uptake and iron homeostasis. Soluble oligomers are toxic to cultured neuroblastoma cells and induce apoptosis (in vitro). Association with GPC1 (via its heparan sulfate chains) targets PRNP to lipid rafts. Also provides Cu(2+) or Zn(2+) for the ascorbate-mediated GPC1 deaminase degradation of its heparan sulfate side chains. In Hylobates lar (Lar gibbon), this protein is Major prion protein (PRNP).